The following is a 414-amino-acid chain: Riboflavin biosynthesis protein RibBA (414 aa).

Residues 1-204 (MTRFDTIERA…IADMIAWRRK (204 aa)) are DHBP synthase. D-ribulose 5-phosphate is bound by residues 28 to 29 (RE), Asp-33, 141 to 145 (RPGHT), and Glu-165. Glu-29 serves as a coordination point for Mg(2+). Mg(2+) is bound at residue His-144. The tract at residues 205 to 414 (HEKQVVRVAE…DDLDLGETAQ (210 aa)) is GTP cyclohydrolase II. 255–259 (RVHSE) contributes to the GTP binding site. Zn(2+) is bound by residues Cys-260, Cys-271, and Cys-273. GTP-binding positions include Gln-276, 299 to 301 (EGR), and Thr-321. The active-site Proton acceptor; for GTP cyclohydrolase activity is the Asp-333. Arg-335 acts as the Nucleophile; for GTP cyclohydrolase activity in catalysis. GTP is bound by residues Thr-356 and Lys-361.

In the N-terminal section; belongs to the DHBP synthase family. This sequence in the C-terminal section; belongs to the GTP cyclohydrolase II family. Mg(2+) serves as cofactor. Mn(2+) is required as a cofactor. It depends on Zn(2+) as a cofactor.

The catalysed reaction is D-ribulose 5-phosphate = (2S)-2-hydroxy-3-oxobutyl phosphate + formate + H(+). The enzyme catalyses GTP + 4 H2O = 2,5-diamino-6-hydroxy-4-(5-phosphoribosylamino)-pyrimidine + formate + 2 phosphate + 3 H(+). It participates in cofactor biosynthesis; riboflavin biosynthesis; 2-hydroxy-3-oxobutyl phosphate from D-ribulose 5-phosphate: step 1/1. Its pathway is cofactor biosynthesis; riboflavin biosynthesis; 5-amino-6-(D-ribitylamino)uracil from GTP: step 1/4. Its function is as follows. Catalyzes the conversion of D-ribulose 5-phosphate to formate and 3,4-dihydroxy-2-butanone 4-phosphate. In terms of biological role, catalyzes the conversion of GTP to 2,5-diamino-6-ribosylamino-4(3H)-pyrimidinone 5'-phosphate (DARP), formate and pyrophosphate. This is Riboflavin biosynthesis protein RibBA from Nocardia farcinica (strain IFM 10152).